Reading from the N-terminus, the 176-residue chain is Ribosome maturation factor RimM (176 aa).

The region spanning 97–176 (EDEFYWRDLI…QITVDWDPDF (80 aa)) is the PRC barrel domain.

This sequence belongs to the RimM family. As to quaternary structure, binds ribosomal protein uS19.

Its subcellular location is the cytoplasm. In terms of biological role, an accessory protein needed during the final step in the assembly of 30S ribosomal subunit, possibly for assembly of the head region. Essential for efficient processing of 16S rRNA. May be needed both before and after RbfA during the maturation of 16S rRNA. It has affinity for free ribosomal 30S subunits but not for 70S ribosomes. This chain is Ribosome maturation factor RimM, found in Shewanella sediminis (strain HAW-EB3).